Reading from the N-terminus, the 288-residue chain is Transmembrane protein 163 (288 aa).

Basic and acidic residues predominate over residues 1 to 11; the sequence is MERAPGSERRS. The disordered stretch occupies residues 1 to 64; it reads MERAPGSERR…ESGQFSDGFE (64 aa). Over 1–87 the chain is Cytoplasmic; the sequence is MERAPGSERR…HEAQNYRKKA (87 aa). A Phosphoserine modification is found at Ser11. Residues 12-24 are compositionally biased toward pro residues; the sequence is PPGPGVPRPPPRG. Over residues 25-42 the composition is skewed to low complexity; it reads HAPSTAAPAPNPAPLSSS. Positions 41–71 are required for interaction with MCOLN1; sequence SSMQPDEERQPRISESGQFSDGFEDRGLLES. Phosphoserine occurs at positions 54, 56, and 60. A helical membrane pass occupies residues 88–108; the sequence is LWVSWLSIIVTLALAVAAFTV. Residues 109 to 115 lie on the Extracellular side of the membrane; sequence SVMRYSA. The chain crosses the membrane as a helical span at residues 116–136; it reads SAFGFAFDAILDVLSSAIVLW. Residues 137-149 lie on the Cytoplasmic side of the membrane; sequence RYSNAAAVHSAHR. The helical transmembrane segment at 150-170 threads the bilayer; that stretch reads EYIACVILGVIFLLSSICIVV. Residues 171–186 lie on the Extracellular side of the membrane; it reads KAIHDLSTRLLPEVDD. The helical transmembrane segment at 187–207 threads the bilayer; it reads FLFSVSILSGILCSVLAVLKF. Residues 208–216 are Cytoplasmic-facing; that stretch reads MLGKVLTSR. Residues 217–237 form a helical membrane-spanning segment; the sequence is ALITDGFNSLVGGVMGFSILL. The Extracellular segment spans residues 238–254; sequence SAEVFKHNAAVWYLDGS. A helical transmembrane segment spans residues 255-275; that stretch reads IGVLIGLTIFAYGVKLLIDMV. Residues 276–288 lie on the Cytoplasmic side of the membrane; it reads PRVRQTRHYEMFE.

It belongs to the TMEM163 family. In terms of assembly, homodimer. Interacts with MCOLN1. Interacts with SLC30A1, SLC30A2, SLC30A3 and SLC30A4. In terms of tissue distribution, strongly expressed in brain. Also detected in lung, liver, kidney and spleen. Mainly expressed in the glutaminergic neuron subpopulations.

The protein resides in the cytoplasmic vesicle. The protein localises to the secretory vesicle. It localises to the synaptic vesicle membrane. It is found in the early endosome membrane. Its subcellular location is the late endosome membrane. The protein resides in the lysosome membrane. The protein localises to the cell membrane. The catalysed reaction is Zn(2+)(in) = Zn(2+)(out). In terms of biological role, zinc ion transporter that mediates zinc efflux and plays a crucial role in intracellular zinc homeostasis. Binds the divalent cations Zn(2+), Ni(2+), and to a minor extent Cu(2+). Is a functional modulator of P2X purinoceptors, including P2RX1, P2RX3, P2RX4 and P2RX7. Plays a role in central nervous system development and is required for myelination, and survival and proliferation of oligodendrocytes. The chain is Transmembrane protein 163 (Tmem163) from Rattus norvegicus (Rat).